Here is a 468-residue protein sequence, read N- to C-terminus: Probable Xaa-Pro aminopeptidase pepP (468 aa).

Mn(2+) is bound by residues D264, D275, E398, and E438.

This sequence belongs to the peptidase M24B family. Mn(2+) is required as a cofactor.

It catalyses the reaction Release of any N-terminal amino acid, including proline, that is linked to proline, even from a dipeptide or tripeptide.. Its function is as follows. Catalyzes the removal of a penultimate prolyl residue from the N-termini of peptides. In Talaromyces stipitatus (strain ATCC 10500 / CBS 375.48 / QM 6759 / NRRL 1006) (Penicillium stipitatum), this protein is Probable Xaa-Pro aminopeptidase pepP (pepP).